The chain runs to 269 residues: Formamidopyrimidine-DNA glycosylase (269 aa).

Residue Pro-2 is the Schiff-base intermediate with DNA of the active site. Glu-3 (proton donor) is an active-site residue. The active-site Proton donor; for beta-elimination activity is Lys-57. Residues His-90, Arg-109, and Lys-150 each contribute to the DNA site. The FPG-type zinc finger occupies 235-269 (QVYGRKGEPCRVCGTPIVATKHAQRATFYCRQCQK). Arg-259 functions as the Proton donor; for delta-elimination activity in the catalytic mechanism.

Belongs to the FPG family. In terms of assembly, monomer. It depends on Zn(2+) as a cofactor.

The enzyme catalyses Hydrolysis of DNA containing ring-opened 7-methylguanine residues, releasing 2,6-diamino-4-hydroxy-5-(N-methyl)formamidopyrimidine.. It carries out the reaction 2'-deoxyribonucleotide-(2'-deoxyribose 5'-phosphate)-2'-deoxyribonucleotide-DNA = a 3'-end 2'-deoxyribonucleotide-(2,3-dehydro-2,3-deoxyribose 5'-phosphate)-DNA + a 5'-end 5'-phospho-2'-deoxyribonucleoside-DNA + H(+). Functionally, involved in base excision repair of DNA damaged by oxidation or by mutagenic agents. Acts as a DNA glycosylase that recognizes and removes damaged bases. Has a preference for oxidized purines, such as 7,8-dihydro-8-oxoguanine (8-oxoG). Has AP (apurinic/apyrimidinic) lyase activity and introduces nicks in the DNA strand. Cleaves the DNA backbone by beta-delta elimination to generate a single-strand break at the site of the removed base with both 3'- and 5'-phosphates. This chain is Formamidopyrimidine-DNA glycosylase, found in Escherichia coli O157:H7.